The following is a 493-amino-acid chain: EGF-containing fibulin-like extracellular matrix protein 1 (493 aa).

The N-terminal stretch at methionine 1–serine 17 is a signal peptide. One can recognise an EGF-like 1; atypical domain in the interval tyrosine 26–leucine 71. The EGF-like 2; calcium-binding domain maps to aspartate 173 to valine 213. Cystine bridges form between cysteine 177-cysteine 190, cysteine 184-cysteine 199, cysteine 201-cysteine 212, cysteine 218-cysteine 228, cysteine 224-cysteine 237, cysteine 239-cysteine 252, cysteine 258-cysteine 268, cysteine 264-cysteine 277, cysteine 279-cysteine 292, cysteine 298-cysteine 309, cysteine 305-cysteine 318, cysteine 320-cysteine 332, cysteine 338-cysteine 350, cysteine 344-cysteine 359, and cysteine 365-cysteine 377. An EGF-like 3; calcium-binding domain is found at aspartate 214–valine 253. N-linked (GlcNAc...) asparagine glycosylation occurs at asparagine 249. The region spanning aspartate 254 to glutamate 293 is the EGF-like 4; calcium-binding domain. Residues aspartate 259–phenylalanine 493 form a mediates interaction with TIMP3 region. Residues aspartate 294–glutamine 333 enclose the EGF-like 5; calcium-binding domain. Residues aspartate 334 to valine 378 enclose the EGF-like 6; calcium-binding domain.

It belongs to the fibulin family. As to quaternary structure, interacts with ECM1. Interacts with TIMP3. As to expression, expressed in the eye in the ciliary body, cornea, inner nuclear layer of the retina, and in the optic disk.

The protein resides in the secreted. Its subcellular location is the extracellular space. The protein localises to the extracellular matrix. Binds EGFR, the EGF receptor, inducing EGFR autophosphorylation and the activation of downstream signaling pathways. May play a role in cell adhesion and migration. May function as a negative regulator of chondrocyte differentiation. In the olfactory epithelium, it may regulate glial cell migration, differentiation and the ability of glial cells to support neuronal neurite outgrowth. In Mus musculus (Mouse), this protein is EGF-containing fibulin-like extracellular matrix protein 1 (Efemp1).